The primary structure comprises 337 residues: Glyceraldehyde-3-phosphate dehydrogenase (337 aa).

Residues 12 to 13 (RI), D34, and K79 each bind NAD(+). D-glyceraldehyde 3-phosphate-binding positions include 150-152 (SCT), T181, 210-211 (TG), and R233. C151 serves as the catalytic Nucleophile. N315 is a binding site for NAD(+).

This sequence belongs to the glyceraldehyde-3-phosphate dehydrogenase family. Homotetramer.

Its subcellular location is the cytoplasm. The enzyme catalyses D-glyceraldehyde 3-phosphate + phosphate + NAD(+) = (2R)-3-phospho-glyceroyl phosphate + NADH + H(+). It functions in the pathway carbohydrate degradation; glycolysis; pyruvate from D-glyceraldehyde 3-phosphate: step 1/5. In Cochliobolus heterostrophus (Southern corn leaf blight fungus), this protein is Glyceraldehyde-3-phosphate dehydrogenase (GPD1).